A 567-amino-acid chain; its full sequence is Restriction of telomere capping protein 5 (567 aa).

In terms of domain architecture, TLDc spans 289-515 (KVMTPALLAQ…IQDVEVWGCG (227 aa)).

Belongs to the RTC5 family.

The protein resides in the cytoplasm. May be involved in a process influencing telomere capping. This Saccharomyces cerevisiae (strain RM11-1a) (Baker's yeast) protein is Restriction of telomere capping protein 5 (RTC5).